Reading from the N-terminus, the 485-residue chain is UDP-N-acetylmuramate--L-alanine ligase (485 aa).

127-133 (GTHGKTT) is an ATP binding site.

The protein belongs to the MurCDEF family.

It is found in the cytoplasm. The catalysed reaction is UDP-N-acetyl-alpha-D-muramate + L-alanine + ATP = UDP-N-acetyl-alpha-D-muramoyl-L-alanine + ADP + phosphate + H(+). It functions in the pathway cell wall biogenesis; peptidoglycan biosynthesis. Functionally, cell wall formation. This is UDP-N-acetylmuramate--L-alanine ligase from Shewanella frigidimarina (strain NCIMB 400).